We begin with the raw amino-acid sequence, 303 residues long: Glutamate formimidoyltransferase (303 aa).

Histidine 81 functions as the For formimidoyltransferase activity in the catalytic mechanism. 164-172 (GPSVVGKAG) contributes to the folate binding site.

It belongs to the formiminotransferase family.

It localises to the cytoplasm. It catalyses the reaction (6S)-5-formyl-5,6,7,8-tetrahydrofolate + L-glutamate = N-formyl-L-glutamate + (6S)-5,6,7,8-tetrahydrofolate + H(+). The enzyme catalyses 5-formimidoyltetrahydrofolate + L-glutamate = N-formimidoyl-L-glutamate + (6S)-5,6,7,8-tetrahydrofolate. The catalysed reaction is (6S)-5-formyl-5,6,7,8-tetrahydrofolate + ATP = (6R)-5,10-methenyltetrahydrofolate + ADP + phosphate. It functions in the pathway amino-acid degradation; L-histidine degradation into L-glutamate; L-glutamate from N-formimidoyl-L-glutamate (transferase route): step 1/1. Its pathway is one-carbon metabolism; tetrahydrofolate interconversion. Functionally, catalyzes the transfer of the formyl group from N-formylglutamate to tetrahydrofolate (THF) to yield 5-formyltetrahydrofolate (5-CHO-THF) and glutamate (Glu). The triglutamate form of 5-CHO-THF (5-CHO-THF-Glu3) can also be used as substrate. It can also catalyze the transfer of the formimino group from N-formiminoglutamate to tetrahydrofolate (THF) to yield 5-formiminotetrahydrofolate (5-NH=CH-THF) and glutamate (Glu). It can replace YgfA to catalyze the irreversible ATP-dependent transformation of 5-CHO-THF to form 5,10-methenyltetrahydrofolate (5,10-CH=THF). The protein is Glutamate formimidoyltransferase of Thermoplasma acidophilum (strain ATCC 25905 / DSM 1728 / JCM 9062 / NBRC 15155 / AMRC-C165).